A 500-amino-acid chain; its full sequence is Lariat debranching enzyme (500 aa).

Residues Met-1–Pro-25 are disordered. 4 residues coordinate a divalent metal cation: Cys-48, His-50, Asp-79, and Asn-124. The lariat recognition loop stretch occupies residues Ser-164–Arg-194. Residues His-222, His-274, and His-276 each contribute to the a divalent metal cation site. The segment at Asp-453–Glu-500 is disordered. Residues Asp-462–Phe-471 are compositionally biased toward acidic residues. Residues Val-472 to Glu-500 show a composition bias toward basic and acidic residues.

The protein belongs to the lariat debranching enzyme family. Requires Fe(2+) as cofactor. Zn(2+) is required as a cofactor. The cofactor is Mn(2+).

It is found in the nucleus. Its activity is regulated as follows. Active in presence of diverse metals including Fe(2+), Zn(2+), Mn(2+). Binds two metal cations in two adjacent alpha and beta metal-binding pockets. In terms of biological role, cleaves the 2'-5' phosphodiester linkage at the branch point of lariat intron pre-mRNAs after splicing and converts them into linear molecules that are subsequently degraded. It thereby facilitates ribonucleotide turnover. This is Lariat debranching enzyme from Caenorhabditis elegans.